The primary structure comprises 373 residues: Leucine-, isoleucine-, valine-, threonine-, and alanine-binding protein (373 aa).

The signal sequence occupies residues 1–26 (MKKGTQRLSRLFAAMAIAGFASYSMA). An intrachain disulfide couples Cys-80 to Cys-105.

This sequence belongs to the leucine-binding protein family.

It localises to the periplasm. Its function is as follows. Component of the high-affinity leucine, isoleucine, valine transport system I (LIV-I), which is operative without Na(+) and is specific for alanine and threonine, in addition to branched-chain amino acids. Binds L-leucine, L-isoleucine, L-valine, L-threonine and L-alanine with nanomolar affinities. Can also bind L-homoserine with high affinity. The polypeptide is Leucine-, isoleucine-, valine-, threonine-, and alanine-binding protein (braC) (Pseudomonas aeruginosa (strain ATCC 15692 / DSM 22644 / CIP 104116 / JCM 14847 / LMG 12228 / 1C / PRS 101 / PAO1)).